The sequence spans 94 residues: Cell division topological specificity factor (94 aa).

It belongs to the MinE family.

In terms of biological role, prevents the cell division inhibition by proteins MinC and MinD at internal division sites while permitting inhibition at polar sites. This ensures cell division at the proper site by restricting the formation of a division septum at the midpoint of the long axis of the cell. This is Cell division topological specificity factor from Clostridioides difficile (strain 630) (Peptoclostridium difficile).